The following is a 507-amino-acid chain: MGAPRSLLLALAAGLAVARPPNIVLIFADDLGYGDLGCYGHPSSTTPNLDQLAAGGLRFTDFYVPVSLCTPSRAALLTGRLPVRMGMYPGVLVPSSRGGLPLEEVTVAEVLAARGYLTGMAGKWHLGVGPEGAFLPPHQGFHRFLGIPYSHDQGPCQNLTCFPPATPCDGGCDQGLVPIPLLANLSVEAQPPWLPGLEARYMAFAHDLMADAQRQDRPFFLYYASHHTHYPQFSGQSFAERSGRGPFGDSLMELDAAVGTLMTAIGDLGLLEETLVIFTADNGPETMRMSRGGCSGLLRCGKGTTYEGGVREPALAFWPGHIAPGVTHELASSLDLLPTLAALAGAPLPNVTLDGFDLSPLLLGTGKSPRQSLFFYPSYPDEVRGVFAVRTGKYKAHFFTQGSAHSDTTADPACHASSSLTAHEPPLLYDLSKDPGENYNLLGGVAGATPEVLQALKQLQLLKAQLDAAVTFGPSQVARGEDPALQICCHPGCTPRPACCHCPDPHA.

The N-terminal stretch at 1–18 (MGAPRSLLLALAAGLAVA) is a signal peptide. Asp29, Asp30, and Cys69 together coordinate Ca(2+). The Nucleophile role is filled by Cys69. At Cys69 the chain carries 3-oxoalanine (Cys). Lys123 contacts substrate. His125 is a catalytic residue. A substrate-binding site is contributed by Ser150. Disulfide bonds link Cys156–Cys172 and Cys161–Cys168. Asn158 carries an N-linked (GlcNAc...) asparagine glycan. An N-linked (GlcNAc...) asparagine glycan is attached at Asn184. His229 provides a ligand contact to substrate. Ca(2+) is bound by residues Asp281 and Asn282. Intrachain disulfides connect Cys300–Cys414, Cys488–Cys500, Cys489–Cys502, and Cys493–Cys499. A substrate-binding site is contributed by Lys302. N-linked (GlcNAc...) asparagine glycosylation is present at Asn350.

The protein belongs to the sulfatase family. In terms of assembly, homodimer at neutral pH and homooctamer at acidic pH. Exists both as a single chain of 58 kDa (component A) or as a chain of 50 kDa (component B) linked by disulfide bond(s) to a 7 kDa chain (component C). Interacts with SUMF1. Ca(2+) serves as cofactor. Post-translationally, the conversion to 3-oxoalanine (also known as C-formylglycine, FGly), of a serine or cysteine residue in prokaryotes and of a cysteine residue in eukaryotes, is critical for catalytic activity. This post-translational modification is severely defective in multiple sulfatase deficiency (MSD).

It is found in the endoplasmic reticulum. The protein resides in the lysosome. It catalyses the reaction an N-acyl-1-beta-D-(3-O-sulfo)-galactosyl-sphing-4-enine + H2O = a beta-D-galactosyl-(1&lt;-&gt;1')-N-acylsphing-4-enine + sulfate + H(+). Inhibited by phosphate. The phosphate forms a covalent bond with the active site 3-oxoalanine. Its function is as follows. Hydrolyzes cerebroside sulfate. This is Arylsulfatase A (ARSA) from Homo sapiens (Human).